The primary structure comprises 889 residues: Cytoplasmic aconitate hydratase (889 aa).

Substrate contacts are provided by residues Gln86 and 205–207 (DSH). [4Fe-4S] cluster is bound by residues Cys437, Cys503, and Cys506. Substrate is bound by residues Arg536, Arg541, Arg699, and 779–780 (SR).

It belongs to the aconitase/IPM isomerase family. It depends on [4Fe-4S] cluster as a cofactor.

The protein resides in the cytoplasm. It is found in the cytosol. The enzyme catalyses citrate = D-threo-isocitrate. Its function is as follows. Bifunctional iron sensor that switches between 2 activities depending on iron availability. Iron deprivation, promotes its mRNA binding activity through which it regulates the expression of genes involved in iron uptake, sequestration and utilization. Binds to iron-responsive elements (IRES) in the untranslated region of target mRNAs preventing for instance the translation of ferritin and aminolevulinic acid synthase and stabilizing the transferrin receptor mRNA. Conversely, when cellular iron levels are high, binds a 4Fe-4S cluster which precludes RNA binding activity and promotes the aconitase activity, the isomerization of citrate to isocitrate via cis-aconitate. This is Cytoplasmic aconitate hydratase (ACO1) from Gallus gallus (Chicken).